Here is a 188-residue protein sequence, read N- to C-terminus: dCTP deaminase (188 aa).

Residues 111–116 (KSTYAR), 135–137 (TLE), Gln156, Tyr170, and Gln180 each bind dCTP. Glu137 functions as the Proton donor/acceptor in the catalytic mechanism.

Belongs to the dCTP deaminase family. Homotrimer.

The enzyme catalyses dCTP + H2O + H(+) = dUTP + NH4(+). The protein operates within pyrimidine metabolism; dUMP biosynthesis; dUMP from dCTP (dUTP route): step 1/2. Its function is as follows. Catalyzes the deamination of dCTP to dUTP. The polypeptide is dCTP deaminase (Cupriavidus necator (strain ATCC 17699 / DSM 428 / KCTC 22496 / NCIMB 10442 / H16 / Stanier 337) (Ralstonia eutropha)).